The following is a 188-amino-acid chain: UPF0397 protein LCK_00164 (188 aa).

The next 5 helical transmembrane spans lie at 15–35, 48–68, 79–99, 121–141, and 154–174; these read VVAT…IAIP, GWLA…VGLI, GAPW…LGFG, WQAV…DIII, and AVTT…LLVA.

The protein belongs to the UPF0397 family.

The protein resides in the cell membrane. This chain is UPF0397 protein LCK_00164, found in Leuconostoc citreum (strain KM20).